The primary structure comprises 198 residues: Orotate phosphoribosyltransferase (198 aa).

Residues Arg108, Lys109, Lys112, His114, and 135–143 each bind 5-phospho-alpha-D-ribose 1-diphosphate; that span reads EDVVTTGKS. Residues Thr139 and Arg167 each contribute to the orotate site.

The protein belongs to the purine/pyrimidine phosphoribosyltransferase family. PyrE subfamily. In terms of assembly, homodimer. It depends on Mg(2+) as a cofactor.

The enzyme catalyses orotidine 5'-phosphate + diphosphate = orotate + 5-phospho-alpha-D-ribose 1-diphosphate. The protein operates within pyrimidine metabolism; UMP biosynthesis via de novo pathway; UMP from orotate: step 1/2. Its function is as follows. Catalyzes the transfer of a ribosyl phosphate group from 5-phosphoribose 1-diphosphate to orotate, leading to the formation of orotidine monophosphate (OMP). This Synechocystis sp. (strain ATCC 27184 / PCC 6803 / Kazusa) protein is Orotate phosphoribosyltransferase.